A 272-amino-acid chain; its full sequence is Hydroxyacylglutathione hydrolase (272 aa).

Zn(2+) is bound by residues histidine 62, histidine 64, aspartate 66, histidine 67, histidine 126, aspartate 146, and histidine 184.

The protein belongs to the metallo-beta-lactamase superfamily. Glyoxalase II family. As to quaternary structure, monomer. Requires Zn(2+) as cofactor.

It catalyses the reaction an S-(2-hydroxyacyl)glutathione + H2O = a 2-hydroxy carboxylate + glutathione + H(+). It participates in secondary metabolite metabolism; methylglyoxal degradation; (R)-lactate from methylglyoxal: step 2/2. Functionally, thiolesterase that catalyzes the hydrolysis of S-D-lactoyl-glutathione to form glutathione and D-lactic acid. This chain is Hydroxyacylglutathione hydrolase, found in Saccharophagus degradans (strain 2-40 / ATCC 43961 / DSM 17024).